A 467-amino-acid polypeptide reads, in one-letter code: MKVLFAITEAEPFVKTGGLGEVGRYLPLALQEQGVEIRVILPQYSSIPRNYLQKMKTIKEFTVPLAWRNQYCGLKELKYEGIHYYFLDNEYYFRRSRCYGDGDEGEQYAYFSRAVLESVRYLPEFKPDIIHCHDWHTALVPLFLKAFYAQDTLYYNIKTLFTIHNLKYQGIFPREVREDVLGLSGELSSSAQLEFYGGVNFMKAGIMHSDQVTTVSPTYAREIQHPYFGEGLHGVIQGRKDSLLGILNGVPRPWPSPTLADKRANRMKLQEQLNFTNNEEIPILSMISRLVEQKGLDLLLHVLDEILALDIRLVVLGTGDAHYEERLQRFAEGYPGKLRVILGYQEELAHRIYAGADIFLMPSRFEPCGIAQMIAMSYGTIPIVRETGGLKDTVRPYSPISGEGNGFTFTDYNAHELLYAIQKAVEMFRNQKDTWQKLQENALSSDFSWNRSAARYRDVYESLYYSS.

Position 15 (lysine 15) interacts with ADP-alpha-D-glucose.

It belongs to the glycosyltransferase 1 family. Bacterial/plant glycogen synthase subfamily.

The catalysed reaction is [(1-&gt;4)-alpha-D-glucosyl](n) + ADP-alpha-D-glucose = [(1-&gt;4)-alpha-D-glucosyl](n+1) + ADP + H(+). The protein operates within glycan biosynthesis; glycogen biosynthesis. Synthesizes alpha-1,4-glucan chains using ADP-glucose. The sequence is that of Glycogen synthase from Desulfitobacterium hafniense (strain DSM 10664 / DCB-2).